The chain runs to 430 residues: uncharacterized protein (430 aa).

This is an uncharacterized protein from Bos taurus (Bovine).